The sequence spans 337 residues: Ornithine carbamoyltransferase, catabolic (337 aa).

Residues 57–60 (STRT), Q84, R108, and 135–138 (HPTQ) contribute to the carbamoyl phosphate site. L-ornithine-binding positions include N167, D231, and 235 to 236 (SM). Residues 272-273 (CL) and R317 each bind carbamoyl phosphate.

This sequence belongs to the aspartate/ornithine carbamoyltransferase superfamily. OTCase family.

It localises to the cytoplasm. The enzyme catalyses carbamoyl phosphate + L-ornithine = L-citrulline + phosphate + H(+). Its pathway is amino-acid degradation; L-arginine degradation via ADI pathway; carbamoyl phosphate from L-arginine: step 2/2. Functionally, reversibly catalyzes the transfer of the carbamoyl group from carbamoyl phosphate (CP) to the N(epsilon) atom of ornithine (ORN) to produce L-citrulline. The protein is Ornithine carbamoyltransferase, catabolic of Streptococcus ratti.